The primary structure comprises 265 residues: Cytosolic Fe-S cluster assembly factor NUBP2 homolog (265 aa).

22–29 (GKGGVGKS) contributes to the ATP binding site. The [4Fe-4S] cluster site is built by Cys196 and Cys199.

The protein belongs to the Mrp/NBP35 ATP-binding proteins family. NUBP2/CFD1 subfamily. As to quaternary structure, heterotetramer of 2 NUBP1 and 2 NUBP2 chains. [4Fe-4S] cluster is required as a cofactor.

It localises to the cytoplasm. In terms of biological role, component of the cytosolic iron-sulfur (Fe/S) protein assembly (CIA) machinery. Required for maturation of extramitochondrial Fe-S proteins. The NUBP1-NUBP2 heterotetramer forms a Fe-S scaffold complex, mediating the de novo assembly of an Fe-S cluster and its transfer to target apoproteins. The chain is Cytosolic Fe-S cluster assembly factor NUBP2 homolog from Trichoplax adhaerens (Trichoplax reptans).